Reading from the N-terminus, the 247-residue chain is 3-deoxy-manno-octulosonate cytidylyltransferase (247 aa).

Belongs to the KdsB family.

It localises to the cytoplasm. The enzyme catalyses 3-deoxy-alpha-D-manno-oct-2-ulosonate + CTP = CMP-3-deoxy-beta-D-manno-octulosonate + diphosphate. Its pathway is nucleotide-sugar biosynthesis; CMP-3-deoxy-D-manno-octulosonate biosynthesis; CMP-3-deoxy-D-manno-octulosonate from 3-deoxy-D-manno-octulosonate and CTP: step 1/1. It functions in the pathway bacterial outer membrane biogenesis; lipopolysaccharide biosynthesis. Activates KDO (a required 8-carbon sugar) for incorporation into bacterial lipopolysaccharide in Gram-negative bacteria. The protein is 3-deoxy-manno-octulosonate cytidylyltransferase of Afipia carboxidovorans (strain ATCC 49405 / DSM 1227 / KCTC 32145 / OM5) (Oligotropha carboxidovorans).